We begin with the raw amino-acid sequence, 172 residues long: MAFEDLLDDPVVQKYLHELVGPKGMPVAAAPPDGEVTDEELAERLGLELNDVRRALFILYENDLATYRRVRDEDSGWLTYLWTFQYENVPGNLREEMDRLLEALVDRREYELENEFYLCEVCSIRFEFGEAMDLGFECPECGSAVEAMENTDLVDAMDDRIERLRSELAVEA.

The 83-residue stretch at 8–90 folds into the HTH TFE/IIEalpha-type domain; sequence DDPVVQKYLH…LWTFQYENVP (83 aa).

It belongs to the TFE family. In terms of assembly, monomer. Interaction with RNA polymerase subunits RpoF and RpoE is necessary for Tfe stimulatory transcription activity. Able to interact with Tbp and RNA polymerase in the absence of DNA promoter. Interacts both with the preinitiation and elongation complexes.

Functionally, transcription factor that plays a role in the activation of archaeal genes transcribed by RNA polymerase. Facilitates transcription initiation by enhancing TATA-box recognition by TATA-box-binding protein (Tbp), and transcription factor B (Tfb) and RNA polymerase recruitment. Not absolutely required for transcription in vitro, but particularly important in cases where Tbp or Tfb function is not optimal. It dynamically alters the nucleic acid-binding properties of RNA polymerases by stabilizing the initiation complex and destabilizing elongation complexes. Seems to translocate with the RNA polymerase following initiation and acts by binding to the non template strand of the transcription bubble in elongation complexes. The protein is Transcription factor E of Halobacterium salinarum (strain ATCC 700922 / JCM 11081 / NRC-1) (Halobacterium halobium).